Here is a 569-residue protein sequence, read N- to C-terminus: Santalene synthase (569 aa).

Residues R284, D321, D325, and R460 each coordinate (2E)-geranyl diphosphate. Residues D321 and D325 each contribute to the Mg(2+) site. The short motif at 321–325 is the DDXXD motif element; it reads DDAYD. Mg(2+) contacts are provided by N463, T467, and E471.

It belongs to the terpene synthase family. Tpsb subfamily. Mg(2+) is required as a cofactor. Requires Mn(2+) as cofactor.

It carries out the reaction (2E,6E)-farnesyl diphosphate = (1S,5S,6R)-alpha-bergamotene + diphosphate. It catalyses the reaction (2E,6E)-farnesyl diphosphate = (+)-alpha-santalene + diphosphate. The catalysed reaction is (2E,6E)-farnesyl diphosphate = (-)-beta-santalene + diphosphate. Functionally, catalyzes a mixture of sesquiterpenoids from (2E,6E)-farnesyl diphosphate in fragrance biosynthesis. Catalyzes the formation of alpha-santalene, beta-santalene, epi-beta-santalene and exo-alpha-bergamotene, as well as traces of alpha-farnesene and beta-farnesene. This is Santalene synthase from Santalum austrocaledonicum (Sandalwood).